The sequence spans 422 residues: Ena/VASP-like protein (422 aa).

The WH1 domain occupies 4-118; it reads FEEFSEQSIC…NAMLFALNIM (115 aa). Over residues 120–135 the composition is skewed to polar residues; that stretch reads SQEGGPSSQRQVQNGP. Disordered regions lie at residues 120-139 and 147-375; these read SQEG…SPDE and VMEQ…PAGS. Residue S136 is modified to Phosphoserine. The segment covering 147–163 has biased composition (basic and acidic residues); sequence VMEQHQQQRQESLERRT. Over residues 175–186 the composition is skewed to low complexity; it reads PSSAASAPVSCS. The segment covering 187–212 has biased composition (pro residues); that stretch reads GPPPPPPPPVPPPPTGATPPPPPPLP. The EVH2 block A stretch occupies residues 228–248; the sequence is GLAAAIAGAKLRRVQRPEDAS. Positions 228–419 are EVH2; that stretch reads GLAAAIAGAK…DAIRQELSGI (192 aa). Residues 237-240 carry the KLKR motif; the sequence is KLRR. The span at 248-259 shows a compositional bias: low complexity; sequence SGGSSPSGTSKS. Phosphoserine occurs at positions 252 and 265. The interval 271–288 is EVH2 block B; the sequence is GGLMEEMNKLLAKRRKAA. A compositionally biased stretch (polar residues) spans 305 to 326; it reads EDPSTSPSPGTRAASQPPNSSE. A phosphoserine mark is found at S310, S312, S335, S337, S347, S355, S360, and S375. The segment covering 327-337 has biased composition (basic and acidic residues); it reads AGRKPWERSNS. Residues 348–368 are required for interaction with ZDHHC17; it reads RTPSVAKSPEAKSPLQSQPHS. Residues 385–419 are EVH2 block C; sequence DLDRMKQEILEEVVRELHKVKDEIIDAIRQELSGI. The stretch at 388–414 forms a coiled coil; it reads RMKQEILEEVVRELHKVKDEIIDAIRQ.

It belongs to the Ena/VASP family. As to quaternary structure, homotetramer. Binds to the SH3 domains of ABL1, LYN and SRC. Also binds to profilin, with preference for isoform IIa of PFN2, and the WW domain of APBB1/FE65. Binds to SEMA6A. Interacts, via the Pro-rich region, with the C-terminal SH3 domain of DNMBP. Interacts with RAPH1. Binds, via the EVH1 domain, the Pro-rich domain of Listeria monocytogenes actA. Binds, via the EVH1 domain, the Pro-rich domain of ZYX. Interacts with FYB1. Interacts with ZDHHC17. Phosphorylated by PKA; phosphorylation abolishes binding to SH3 domains of ABL and SRC.

The protein resides in the cytoplasm. The protein localises to the cytoskeleton. It localises to the stress fiber. It is found in the cell projection. Its subcellular location is the lamellipodium. Functionally, ena/VASP proteins are actin-associated proteins involved in a range of processes dependent on cytoskeleton remodeling and cell polarity such as axon guidance and lamellipodial and filopodial dynamics in migrating cells. EVL enhances actin nucleation and polymerization. The sequence is that of Ena/VASP-like protein (EVL) from Pongo abelii (Sumatran orangutan).